The sequence spans 410 residues: BTB and MATH domain-containing protein 42 (410 aa).

Polar residues predominate over residues 1-19; that stretch reads MSSRSSWSSTEQINRTISS. The segment at 1-29 is disordered; the sequence is MSSRSSWSSTEQINRTISSRADDLPPQPR. An MATH domain is found at 45–173; that stretch reads STKLEWKIEQ…DGTLFLICEV (129 aa). The 69-residue stretch at 219 to 287 folds into the BTB domain; it reads TDCVIHVGNK…MYTGATESLE (69 aa). The disordered stretch occupies residues 389-410; that stretch reads TSNIPISVSPPPARKRLRRSAK. Positions 401 to 410 are enriched in basic residues; sequence ARKRLRRSAK.

As to quaternary structure, interacts with cul-3.

It participates in protein modification; protein ubiquitination. Functionally, probable substrate-specific adapter of an E3 ubiquitin-protein ligase complex which mediates the ubiquitination and subsequent proteasomal degradation of target proteins. This Caenorhabditis elegans protein is BTB and MATH domain-containing protein 42 (bath-42).